A 354-amino-acid polypeptide reads, in one-letter code: DNA replication and repair protein RecF (354 aa).

30–37 (GDNGSGKT) is a binding site for ATP.

The protein belongs to the RecF family.

The protein localises to the cytoplasm. In terms of biological role, the RecF protein is involved in DNA metabolism; it is required for DNA replication and normal SOS inducibility. RecF binds preferentially to single-stranded, linear DNA. It also seems to bind ATP. The sequence is that of DNA replication and repair protein RecF from Idiomarina loihiensis (strain ATCC BAA-735 / DSM 15497 / L2-TR).